Reading from the N-terminus, the 83-residue chain is Retinal cone rhodopsin-sensitive cGMP 3',5'-cyclic phosphodiesterase subunit gamma (83 aa).

The span at M1–P19 shows a compositional bias: low complexity. The disordered stretch occupies residues M1–P51. Basic residues predominate over residues G22–V43.

This sequence belongs to the rod/cone cGMP-PDE gamma subunit family. In terms of assembly, tetramer composed of two catalytic chains (alpha and beta), and two inhibitory chains (gamma).

The enzyme catalyses 3',5'-cyclic GMP + H2O = GMP + H(+). Functionally, participates in processes of transmission and amplification of the visual signal. cGMP-PDEs are the effector molecules in G-protein-mediated phototransduction in vertebrate rods and cones. In Ictidomys tridecemlineatus (Thirteen-lined ground squirrel), this protein is Retinal cone rhodopsin-sensitive cGMP 3',5'-cyclic phosphodiesterase subunit gamma (PDE6H).